Here is a 300-residue protein sequence, read N- to C-terminus: uncharacterized protein (300 aa).

The Charge relay system role is filled by Ser49. Tyr137 functions as the Proton donor in the catalytic mechanism. Lys165 acts as the Schiff-base intermediate with substrate in catalysis.

Belongs to the DapA family. In terms of assembly, homotetramer.

It is found in the cytoplasm. Its function is as follows. Upon expression in E.coli complements a dapA deletion mutation, but this may not be its physiological function. This is an uncharacterized protein from Rhizobium meliloti (Ensifer meliloti).